Reading from the N-terminus, the 448-residue chain is MSLSQAKYLPQEIIRRKRDGEVLTNDEINFFIQGVANNTVSEGQIAAFAMAIFFREMTMPERIALTCAMRDSGMVIDWSHMNFDGPIVDKHSTGGVGDVTSLMLGPMVAACGGYVPMISGRGLGHTGGTLDKLEAIPGYNITPTNDVFGKVTKQAGVAIIGQTGDLAPADKRVYATRDITATVDNISLITASILSKKLAAGLESLVMDVKVGSGAFMPTYEASEELAKSIVAVANGAGTNTTAILTDMNQVLASSAGNAVEVREAVRFLTGEYRNPRLLEVTMASCAEMLVLGKLAKDTAQAREKLQAVLDNGQAADRFGKMVAGLGGPSDFVENYDKYLAKAEIIRPVYAQQSGVISAMDTRAIGMAVVGMGGGRRVATDRIDYAVGFDQFIRLGEIADSNKPLAMIHARNEEQWQQAANALQSAIKVGGDYLPTPDVYRQIRAQDV.

Belongs to the thymidine/pyrimidine-nucleoside phosphorylase family. As to quaternary structure, homodimer.

The enzyme catalyses thymidine + phosphate = 2-deoxy-alpha-D-ribose 1-phosphate + thymine. The protein operates within pyrimidine metabolism; dTMP biosynthesis via salvage pathway; dTMP from thymine: step 1/2. Its function is as follows. The enzymes which catalyze the reversible phosphorolysis of pyrimidine nucleosides are involved in the degradation of these compounds and in their utilization as carbon and energy sources, or in the rescue of pyrimidine bases for nucleotide synthesis. This Vibrio cholerae serotype O1 (strain ATCC 39315 / El Tor Inaba N16961) protein is Thymidine phosphorylase.